Consider the following 487-residue polypeptide: NADH-quinone oxidoreductase subunit N (487 aa).

The next 13 membrane-spanning stretches (helical) occupy residues 7–27 (ILGP…LLMV), 38–58 (LVGL…GLGA), 79–99 (YAKA…MVWL), 111–131 (ILVL…DLIA), 164–184 (FVLG…VYGF), 207–227 (LLIG…AVPF), 238–258 (APTP…LTLF), 276–296 (VIIL…IVQT), 301–321 (LMAY…AAGT), 328–348 (VLVY…VILA), 373–393 (AAAM…AGFF), 406–426 (GLFA…FYYL), and 451–471 (VILI…SVVV).

It belongs to the complex I subunit 2 family. NDH-1 is composed of 14 different subunits. Subunits NuoA, H, J, K, L, M, N constitute the membrane sector of the complex.

The protein localises to the cell inner membrane. It carries out the reaction a quinone + NADH + 5 H(+)(in) = a quinol + NAD(+) + 4 H(+)(out). NDH-1 shuttles electrons from NADH, via FMN and iron-sulfur (Fe-S) centers, to quinones in the respiratory chain. The immediate electron acceptor for the enzyme in this species is believed to be ubiquinone. Couples the redox reaction to proton translocation (for every two electrons transferred, four hydrogen ions are translocated across the cytoplasmic membrane), and thus conserves the redox energy in a proton gradient. The polypeptide is NADH-quinone oxidoreductase subunit N (Rhodospirillum rubrum (strain ATCC 11170 / ATH 1.1.1 / DSM 467 / LMG 4362 / NCIMB 8255 / S1)).